A 397-amino-acid chain; its full sequence is Tryptophan synthase beta chain (397 aa).

K86 bears the N6-(pyridoxal phosphate)lysine mark.

The protein belongs to the TrpB family. Tetramer of two alpha and two beta chains. Pyridoxal 5'-phosphate is required as a cofactor.

It carries out the reaction (1S,2R)-1-C-(indol-3-yl)glycerol 3-phosphate + L-serine = D-glyceraldehyde 3-phosphate + L-tryptophan + H2O. It functions in the pathway amino-acid biosynthesis; L-tryptophan biosynthesis; L-tryptophan from chorismate: step 5/5. The beta subunit is responsible for the synthesis of L-tryptophan from indole and L-serine. The sequence is that of Tryptophan synthase beta chain from Edwardsiella ictaluri (strain 93-146).